The chain runs to 556 residues: Innexin-7 (556 aa).

Helical transmembrane passes span L21 to I41, F127 to A147, and A213 to L233. An N-linked (GlcNAc...) asparagine glycan is attached at N267. A helical transmembrane segment spans residues I310–F330. The segment at D431–W556 is disordered. A compositionally biased stretch (polar residues) spans V435–H447. Basic and acidic residues predominate over residues R452–V461. The segment covering S463–P474 has biased composition (polar residues). Residues K500–S513 show a composition bias toward basic residues. A compositionally biased stretch (low complexity) spans S514 to P527. Residues H539–W556 are compositionally biased toward basic and acidic residues.

The protein belongs to the pannexin family.

The protein resides in the cell membrane. Its subcellular location is the cell junction. The protein localises to the gap junction. Functionally, structural component of the gap junctions. The protein is Innexin-7 (inx-7) of Caenorhabditis elegans.